We begin with the raw amino-acid sequence, 63 residues long: Large ribosomal subunit protein uL29 (63 aa).

Belongs to the universal ribosomal protein uL29 family.

The sequence is that of Large ribosomal subunit protein uL29 from Actinobacillus pleuropneumoniae serotype 5b (strain L20).